The following is a 65-amino-acid chain: Sodium channel alpha-toxin Acra4 (65 aa).

The region spanning 2–63 (RDGYIVDDKN…PIKDPSYKCH (62 aa)) is the LCN-type CS-alpha/beta domain. Cystine bridges form between Cys-12–Cys-62, Cys-16–Cys-34, Cys-20–Cys-44, and Cys-24–Cys-46. Residue Arg-65 is a propeptide, removed by a carboxypeptidase.

This sequence belongs to the long (4 C-C) scorpion toxin superfamily. Sodium channel inhibitor family. Alpha subfamily. Expressed by the venom gland.

The protein resides in the secreted. Its function is as follows. Alpha toxins bind voltage-independently at site-3 of sodium channels (Nav) and inhibit the inactivation of the activated channels, thereby blocking neuronal transmission. Electrophysiological studies of this were performed using sodium-channels expressed in F11 cell culture, by patch-clamp recordings. Affinity of this toxin toward sodium channels in F11 cell line is in the order of 1 uM concentration. The chain is Sodium channel alpha-toxin Acra4 from Androctonus crassicauda (Arabian fat-tailed scorpion).